The chain runs to 114 residues: Vacuolar morphogenesis protein 10 (114 aa).

The protein localises to the vacuole membrane. Functionally, required for vacuolar fusion. Involved in the early steps of the fusion pathway. This chain is Vacuolar morphogenesis protein 10 (VAM10), found in Saccharomyces cerevisiae (strain ATCC 204508 / S288c) (Baker's yeast).